The chain runs to 474 residues: MTTPVVTRFAPSPTGFLHIGGGRTALFNWLYARKHGGRMLLRIEDTDRARSTPEAIDAILDGLKWLGIEWDDDVVYQFSRVARHREIAEQLLAEGKAYRCYATTEELSEMREKARAEGRAKLYDGRWRDRDASEAPQGVKPTIRLKAPLTGETVIEDQVQGRIVWQNENLDDLVLLRGDGTPTYMLAVVVDDHDMGVTHIIRGDDHLINAARQKQIYDTLGWALPTMAHIPLIHGPDGSKLSKRHGALGVDAYRAMGYLPAALRNYLVRLGWSHGDQEIFSTQEMIDAFDLPAIGRSAARFDFAKLENLNGHYIRHCDDAALMTLFENALDFVPGGADLKPKLNDVTRAQLLRAMPGLKERAKTLIELIEGARFIFADRPLPIEAKAAALLTPETRALIDRLRAALESVTSWNAETTEAAMRTFAEQNNLKLGAIAQPLRIALTGRTTSPGIFDVLAALGKETCLARLGDQGSR.

Positions 11 to 21 (PSPTGFLHIGG) match the 'HIGH' region motif. The 'KMSKS' region motif lies at 240-244 (KLSKR). Lys243 contacts ATP.

Belongs to the class-I aminoacyl-tRNA synthetase family. Glutamate--tRNA ligase type 1 subfamily. In terms of assembly, monomer.

Its subcellular location is the cytoplasm. The enzyme catalyses tRNA(Glu) + L-glutamate + ATP = L-glutamyl-tRNA(Glu) + AMP + diphosphate. In terms of biological role, catalyzes the attachment of glutamate to tRNA(Glu) in a two-step reaction: glutamate is first activated by ATP to form Glu-AMP and then transferred to the acceptor end of tRNA(Glu). The chain is Glutamate--tRNA ligase from Nitrobacter winogradskyi (strain ATCC 25391 / DSM 10237 / CIP 104748 / NCIMB 11846 / Nb-255).